We begin with the raw amino-acid sequence, 211 residues long: Pyridoxine/pyridoxamine 5'-phosphate oxidase (211 aa).

Substrate-binding positions include 7–10 (RREY) and lysine 65. Residues 60 to 65 (RIVLLK), 75 to 76 (YT), arginine 81, lysine 82, and glutamine 104 each bind FMN. Positions 122, 126, and 130 each coordinate substrate. Residues 139 to 140 (QS) and tryptophan 184 each bind FMN. Residue 190–192 (RLH) coordinates substrate. Arginine 194 is a binding site for FMN.

It belongs to the pyridoxamine 5'-phosphate oxidase family. In terms of assembly, homodimer. The cofactor is FMN.

It carries out the reaction pyridoxamine 5'-phosphate + O2 + H2O = pyridoxal 5'-phosphate + H2O2 + NH4(+). The enzyme catalyses pyridoxine 5'-phosphate + O2 = pyridoxal 5'-phosphate + H2O2. It participates in cofactor metabolism; pyridoxal 5'-phosphate salvage; pyridoxal 5'-phosphate from pyridoxamine 5'-phosphate: step 1/1. Its pathway is cofactor metabolism; pyridoxal 5'-phosphate salvage; pyridoxal 5'-phosphate from pyridoxine 5'-phosphate: step 1/1. In terms of biological role, catalyzes the oxidation of either pyridoxine 5'-phosphate (PNP) or pyridoxamine 5'-phosphate (PMP) into pyridoxal 5'-phosphate (PLP). This chain is Pyridoxine/pyridoxamine 5'-phosphate oxidase, found in Vibrio parahaemolyticus serotype O3:K6 (strain RIMD 2210633).